Reading from the N-terminus, the 284-residue chain is Bifunctional protein FolD (284 aa).

NADP(+) is bound by residues 166 to 168 (GAS) and I232.

The protein belongs to the tetrahydrofolate dehydrogenase/cyclohydrolase family. Homodimer.

The enzyme catalyses (6R)-5,10-methylene-5,6,7,8-tetrahydrofolate + NADP(+) = (6R)-5,10-methenyltetrahydrofolate + NADPH. It carries out the reaction (6R)-5,10-methenyltetrahydrofolate + H2O = (6R)-10-formyltetrahydrofolate + H(+). Its pathway is one-carbon metabolism; tetrahydrofolate interconversion. Functionally, catalyzes the oxidation of 5,10-methylenetetrahydrofolate to 5,10-methenyltetrahydrofolate and then the hydrolysis of 5,10-methenyltetrahydrofolate to 10-formyltetrahydrofolate. In Alteromonas mediterranea (strain DSM 17117 / CIP 110805 / LMG 28347 / Deep ecotype), this protein is Bifunctional protein FolD.